Reading from the N-terminus, the 758-residue chain is Amyloid beta precursor protein binding family B member 2 (758 aa).

Position 123 is a phosphoserine (S123). The segment at 134-154 (KLEGKEPHPQDSSSCEILPSQ) is disordered. S160 is subject to Phosphoserine. A compositionally biased stretch (basic and acidic residues) spans 176–190 (EQNRGNHHGTAEEKS). Disordered regions lie at residues 176–195 (EQNR…PVQG), 206–295 (LLLQ…LPPG), and 326–351 (DLQG…KQPW). Composition is skewed to polar residues over residues 212-230 (NRPQ…SSSP) and 261-275 (SWTT…PSSP). In terms of domain architecture, WW spans 290-322 (PDLPPGWKRVSDIAGTYYWHIPTGTTQWERPVS). Residues 331–340 (RKGSLSSVTP) are compositionally biased toward polar residues. Residues S334, S409, and S412 each carry the phosphoserine modification. 2 consecutive PID domains span residues 413 to 578 (DPEA…LQVD) and 584 to 736 (TELV…VTTN).

As to quaternary structure, interacts (via C-terminus) with APP (via C-terminus). Interacts with APLP2 (via cytoplasmic domain). In terms of tissue distribution, widely expressed.

Its subcellular location is the endoplasmic reticulum. The protein resides in the golgi apparatus. It localises to the early endosome. Functionally, plays a role in the maintenance of lens transparency, and may also play a role in muscle cell strength. Involved in hippocampal neurite branching and neuromuscular junction formation, as a result plays a role in spatial memory functioning. Activates transcription of APP. This chain is Amyloid beta precursor protein binding family B member 2, found in Homo sapiens (Human).